The primary structure comprises 106 residues: Thioredoxin (106 aa).

The Thioredoxin domain maps to 1-106; that stretch reads GATVKVTNAT…RLAAFLDASL (106 aa). A disulfide bridge links cysteine 31 with cysteine 34.

It belongs to the thioredoxin family.

Functionally, participates in various redox reactions through the reversible oxidation of its active center dithiol to a disulfide and catalyzes dithiol-disulfide exchange reactions. The sequence is that of Thioredoxin (trxA) from Kitasatospora aureofaciens (Streptomyces aureofaciens).